The primary structure comprises 120 residues: Large ribosomal subunit protein uL14 (120 aa).

This sequence belongs to the universal ribosomal protein uL14 family. In terms of assembly, part of the 50S ribosomal subunit. Forms a cluster with proteins L3 and L19. In the 70S ribosome, L14 and L19 interact and together make contacts with the 16S rRNA in bridges B5 and B8.

Functionally, binds to 23S rRNA. Forms part of two intersubunit bridges in the 70S ribosome. The polypeptide is Large ribosomal subunit protein uL14 (Dictyoglomus turgidum (strain DSM 6724 / Z-1310)).